The chain runs to 78 residues: NAD(P)H-quinone oxidoreductase subunit L (78 aa).

The next 2 membrane-spanning stretches (helical) occupy residues 10 to 30 (IILIIYAALAGAYFLVMPAIV) and 47 to 67 (VFMYFLMFLFFPGMLVLSPFL).

It belongs to the complex I NdhL subunit family. NDH-1 can be composed of about 15 different subunits; different subcomplexes with different compositions have been identified which probably have different functions.

The protein localises to the cellular thylakoid membrane. It carries out the reaction a plastoquinone + NADH + (n+1) H(+)(in) = a plastoquinol + NAD(+) + n H(+)(out). The enzyme catalyses a plastoquinone + NADPH + (n+1) H(+)(in) = a plastoquinol + NADP(+) + n H(+)(out). Its function is as follows. NDH-1 shuttles electrons from an unknown electron donor, via FMN and iron-sulfur (Fe-S) centers, to quinones in the respiratory and/or the photosynthetic chain. The immediate electron acceptor for the enzyme in this species is believed to be plastoquinone. Couples the redox reaction to proton translocation, and thus conserves the redox energy in a proton gradient. Cyanobacterial NDH-1 also plays a role in inorganic carbon-concentration. The protein is NAD(P)H-quinone oxidoreductase subunit L of Trichodesmium erythraeum (strain IMS101).